A 156-amino-acid polypeptide reads, in one-letter code: AP-1 complex subunit sigma-1 (156 aa).

This sequence belongs to the adaptor complexes small subunit family. In terms of assembly, adapter protein complex 1 (AP-1) is a heterotetramer composed of two large adaptins (gamma-type subunit APL4 and beta-type subunit APL2), a medium adaptin (mu-type subunit APM1) and a small adaptin (sigma-type subunit APS1). AP-1 interacts with clathrin. Also a component of the AP-1R complex composed of at least APM2, APL4 and APS1.

The protein resides in the cytoplasm. It localises to the nucleus. It is found in the cytoplasmic vesicle. The protein localises to the clathrin-coated vesicle membrane. Its subcellular location is the endosome. The protein resides in the golgi apparatus. Its function is as follows. Component of the adapter complexes which link clathrin to receptors in coated vesicles. Clathrin-associated protein complexes are believed to interact with the cytoplasmic tails of membrane proteins, leading to their selection and concentration. AP19 is probably a subunit of the Golgi membrane adapter. Component of the AP-1-related (AP-1R) complex, an adapter protein complex that mediates sorting of cargo SNARE SNC1. In contrast to the APM1-containing AP-1 complex, AP-1R is incapable of sorting CHS3. This is AP-1 complex subunit sigma-1 (APS1) from Saccharomyces cerevisiae (strain ATCC 204508 / S288c) (Baker's yeast).